A 94-amino-acid chain; its full sequence is uncharacterized protein (94 aa).

This is an uncharacterized protein from Bacillus subtilis (strain 168).